We begin with the raw amino-acid sequence, 264 residues long: Anamorsin homolog 2 (264 aa).

Residues 1-142 form an N-terminal SAM-like domain region; sequence MAATAAALAV…KVSWSMGSSF (142 aa). A linker region spans residues 143–174; it reads PLKKATKGLPKIQIDDDSELIDEDSLLTEDDL. Residues cysteine 185, cysteine 194, cysteine 197, and cysteine 199 each coordinate [2Fe-2S] cluster. Residues 185–199 are fe-S binding site A; it reads CEVGATRKACKNCTC. Residues cysteine 225, cysteine 228, cysteine 236, and cysteine 239 each contribute to the [4Fe-4S] cluster site. Short sequence motifs (cx2C motif) lie at residues 225–228 and 236–239; these read CGNC and CGTC. Residues 225–239 form a fe-S binding site B region; it reads CGNCGLGDAFRCGTC.

The protein belongs to the anamorsin family. Monomer. It depends on [2Fe-2S] cluster as a cofactor. Requires [4Fe-4S] cluster as cofactor.

Its subcellular location is the cytoplasm. The protein resides in the mitochondrion intermembrane space. Component of the cytosolic iron-sulfur (Fe-S) protein assembly (CIA) machinery. Required for the maturation of extramitochondrial Fe-S proteins. Part of an electron transfer chain functioning in an early step of cytosolic Fe-S biogenesis, facilitating the de novo assembly of a [4Fe-4S] cluster on the cytosolic Fe-S scaffold complex. Electrons are transferred from NADPH via a FAD- and FMN-containing diflavin oxidoreductase. Together with the diflavin oxidoreductase, also required for the assembly of the diferric tyrosyl radical cofactor of ribonucleotide reductase (RNR), probably by providing electrons for reduction during radical cofactor maturation in the catalytic small subunit. This Oryza sativa subsp. japonica (Rice) protein is Anamorsin homolog 2.